A 368-amino-acid polypeptide reads, in one-letter code: tRNA-specific 2-thiouridylase MnmA (368 aa).

Residues 23 to 30 (ALSGGVDS) and Leu-49 each bind ATP. Cys-110 acts as the Nucleophile in catalysis. A disulfide bond links Cys-110 and Cys-209. An ATP-binding site is contributed by Gly-135. The segment at 159–161 (KDQ) is interaction with tRNA. Catalysis depends on Cys-209, which acts as the Cysteine persulfide intermediate. Residues 314-315 (RY) are interaction with tRNA.

The protein belongs to the MnmA/TRMU family.

Its subcellular location is the cytoplasm. It carries out the reaction S-sulfanyl-L-cysteinyl-[protein] + uridine(34) in tRNA + AH2 + ATP = 2-thiouridine(34) in tRNA + L-cysteinyl-[protein] + A + AMP + diphosphate + H(+). Functionally, catalyzes the 2-thiolation of uridine at the wobble position (U34) of tRNA, leading to the formation of s(2)U34. This is tRNA-specific 2-thiouridylase MnmA from Synechococcus sp. (strain JA-2-3B'a(2-13)) (Cyanobacteria bacterium Yellowstone B-Prime).